The chain runs to 357 residues: DNA replication and repair protein RecF (357 aa).

30–37 (GANGSGKT) contributes to the ATP binding site.

Belongs to the RecF family.

The protein resides in the cytoplasm. Functionally, the RecF protein is involved in DNA metabolism; it is required for DNA replication and normal SOS inducibility. RecF binds preferentially to single-stranded, linear DNA. It also seems to bind ATP. The polypeptide is DNA replication and repair protein RecF (Salmonella arizonae (strain ATCC BAA-731 / CDC346-86 / RSK2980)).